We begin with the raw amino-acid sequence, 282 residues long: Chlorite dismutase (282 aa).

A signal peptide spans 1–31 (MTNLSIHNFKLSLVAAVIGSAMVMTSSPVAA). Residue Glu-104 participates in Ca(2+) binding. His-204 contacts heme. Arg-217 (proton acceptor) is an active-site residue. Ca(2+)-binding residues include Asp-226 and Thr-265.

This sequence belongs to the chlorite dismutase family. In terms of assembly, homopentamer. The cofactor is heme b.

The protein localises to the periplasm. It carries out the reaction chloride + O2 = chlorite. Catalyzes the heme-dependent decomposition of chlorite to O(2) and chloride with high efficiency and specificity. Used to detoxify chlorite, a by-product of the reduction of perchlorate, a primarily anthropogenic pollutant, in perchlorate-respiring bacteria. This is Chlorite dismutase from Dechloromonas aromatica (strain RCB).